Consider the following 187-residue polypeptide: Ribosome maturation factor RimP (187 aa).

The protein belongs to the RimP family.

It localises to the cytoplasm. Its function is as follows. Required for maturation of 30S ribosomal subunits. The protein is Ribosome maturation factor RimP of Phenylobacterium zucineum (strain HLK1).